Here is a 280-residue protein sequence, read N- to C-terminus: Bifunctional protein FolD (280 aa).

NADP(+) is bound by residues 166–168 and Ser191; that span reads GRS.

It belongs to the tetrahydrofolate dehydrogenase/cyclohydrolase family. Homodimer.

It catalyses the reaction (6R)-5,10-methylene-5,6,7,8-tetrahydrofolate + NADP(+) = (6R)-5,10-methenyltetrahydrofolate + NADPH. The catalysed reaction is (6R)-5,10-methenyltetrahydrofolate + H2O = (6R)-10-formyltetrahydrofolate + H(+). It participates in one-carbon metabolism; tetrahydrofolate interconversion. Functionally, catalyzes the oxidation of 5,10-methylenetetrahydrofolate to 5,10-methenyltetrahydrofolate and then the hydrolysis of 5,10-methenyltetrahydrofolate to 10-formyltetrahydrofolate. The polypeptide is Bifunctional protein FolD (Teredinibacter turnerae (strain ATCC 39867 / T7901)).